Consider the following 457-residue polypeptide: Dihydrolipoyllysine-residue acetyltransferase component of pyruvate dehydrogenase complex, mitochondrial (457 aa).

The transit peptide at 1–30 directs the protein to the mitochondrion; the sequence is MLSAALRRRVLAPTHSALRTGFAAHVVRHY. Residues 36-112 form the Lipoyl-binding domain; it reads HQVIKMPALS…PVGSPIAVLV (77 aa). K77 is modified (N6-lipoyllysine). Residues 129–168 form a disordered region; that stretch reads AGGDAAKPAAPKKEEKSESKSESASAPEPTPEPQQYQSQG. Positions 139–149 are enriched in basic and acidic residues; the sequence is PKKEEKSESKS. Residue K148 is modified to N6-crotonyllysine. The region spanning 179 to 216 is the Peripheral subunit-binding (PSBD) domain; the sequence is NISASAKRLAREKGISIDGLKGTGKNGQITEEDVKKAI. Active-site residues include H430 and D434.

Belongs to the 2-oxoacid dehydrogenase family. In terms of assembly, eukaryotic pyruvate dehydrogenase (PDH) complexes are organized as a core consisting of the oligomeric dihydrolipoamide acetyl-transferase (E2), around which are arranged multiple copies of pyruvate dehydrogenase (E1), dihydrolipoamide dehydrogenase (E3) and protein X (E3BP) bound by non-covalent bonds. Interacts with SIR5; the interaction is direct. (R)-lipoate is required as a cofactor. Post-translationally, decrotonylated at 'Lys-148' by SIR5, which inhibits the activity of the pyruvate dehydrogenase complex (PDC).

The protein localises to the mitochondrion matrix. The catalysed reaction is N(6)-[(R)-dihydrolipoyl]-L-lysyl-[protein] + acetyl-CoA = N(6)-[(R)-S(8)-acetyldihydrolipoyl]-L-lysyl-[protein] + CoA. Its function is as follows. The pyruvate dehydrogenase complex catalyzes the overall conversion of pyruvate to acetyl-CoA and CO(2). High pyruvate dehydrogenase complex activity is required for sufficient energy production during germination of conidia. The polypeptide is Dihydrolipoyllysine-residue acetyltransferase component of pyruvate dehydrogenase complex, mitochondrial (Fusarium oxysporum f. sp. lycopersici (strain 4287 / CBS 123668 / FGSC 9935 / NRRL 34936) (Fusarium vascular wilt of tomato)).